The chain runs to 144 residues: Large ribosomal subunit protein uL16 (144 aa).

This sequence belongs to the universal ribosomal protein uL16 family. In terms of assembly, part of the 50S ribosomal subunit.

Binds 23S rRNA and is also seen to make contacts with the A and possibly P site tRNAs. This Halothermothrix orenii (strain H 168 / OCM 544 / DSM 9562) protein is Large ribosomal subunit protein uL16.